A 226-amino-acid polypeptide reads, in one-letter code: Protein AF-9 homolog (226 aa).

The YEATS domain occupies 8–169 (RIKTLSVSRP…EEFFKILMSR (162 aa)). A coiled-coil region spans residues 187–224 (QLEQEEIDRIEIGIEKVDKEIDELKQKLENLVKQEAIN).

As to quaternary structure, component of the SWR1 chromatin-remodeling complex composed of at least ACT1, ARP4, RVB1, RVB2, ARP6, YAF9, VPS71, VPS72, SWC3, SWC4, SWC5, SWC7 and SWR1, and perhaps BDF1. Component of the NuA4 histone acetyltransferase complex composed of at least ACT1, ARP4, YAF9, VID21, SWC4, EAF3, EAF5, EAF6, EAF7, EPL1, ESA1, TRA1 and YNG2. Interacts with SWC4.

It is found in the cytoplasm. The protein localises to the nucleus. In terms of biological role, component of the SWR1 complex which mediates the ATP-dependent exchange of histone H2A for the H2A variant HZT1 leading to transcriptional regulation of selected genes by chromatin remodeling. Component of the NuA4 histone acetyltransferase complex which is involved in transcriptional activation of selected genes principally by acetylation of nucleosomal histones H4 and H2A. The NuA4 complex is also involved in DNA repair. Yaf9 may also be required for viability in conditions in which the structural integrity of the spindle is compromised. This Saccharomyces cerevisiae (strain ATCC 204508 / S288c) (Baker's yeast) protein is Protein AF-9 homolog (YAF9).